Here is a 481-residue protein sequence, read N- to C-terminus: Pyruvate kinase (481 aa).

Arginine 36 is a binding site for substrate. Residues asparagine 38, serine 40, and aspartate 70 each coordinate K(+). Residue asparagine 38–histidine 41 coordinates ATP. Residues arginine 77 and lysine 160 each coordinate ATP. Glutamate 225 contributes to the Mg(2+) binding site. Substrate is bound by residues glycine 251, aspartate 252, and threonine 284. A Mg(2+)-binding site is contributed by aspartate 252.

This sequence belongs to the pyruvate kinase family. As to quaternary structure, homotetramer. Requires Mg(2+) as cofactor. It depends on K(+) as a cofactor.

The catalysed reaction is pyruvate + ATP = phosphoenolpyruvate + ADP + H(+). The protein operates within carbohydrate degradation; glycolysis; pyruvate from D-glyceraldehyde 3-phosphate: step 5/5. With respect to regulation, allosterically activated by AMP and by several sugar phosphates. Belongs to type II PK. This chain is Pyruvate kinase (pykA), found in Buchnera aphidicola subsp. Schizaphis graminum (strain Sg).